Reading from the N-terminus, the 359-residue chain is UPF0284 protein MAE_56900 (359 aa).

It belongs to the UPF0284 family.

This is UPF0284 protein MAE_56900 from Microcystis aeruginosa (strain NIES-843 / IAM M-2473).